The sequence spans 315 residues: ATP synthase gamma chain (315 aa).

It belongs to the ATPase gamma chain family. As to quaternary structure, F-type ATPases have 2 components, CF(1) - the catalytic core - and CF(0) - the membrane proton channel. CF(1) has five subunits: alpha(3), beta(3), gamma(1), delta(1), epsilon(1). CF(0) has three main subunits: a, b and c.

The protein localises to the cellular thylakoid membrane. Produces ATP from ADP in the presence of a proton gradient across the membrane. The gamma chain is believed to be important in regulating ATPase activity and the flow of protons through the CF(0) complex. The polypeptide is ATP synthase gamma chain (Nostoc sp. (strain PCC 7120 / SAG 25.82 / UTEX 2576)).